We begin with the raw amino-acid sequence, 450 residues long: Neutral protease 2 homolog AFUB_070680 (450 aa).

A signal peptide spans 1-19; it reads MKITALASAILAVAQGALA. The propeptide occupies 20–172; that stretch reads LPARAPALDI…PASIKPLDRR (153 aa). 2 disulfides stabilise this stretch: C179–C251 and C258–C276. H300 provides a ligand contact to Zn(2+). The active site involves E301. The Zn(2+) site is built by H304 and D315. The segment covering 364 to 392 has biased composition (polar residues); it reads QPGQTEPGTQTMWDGYSQPGQTEPGTQTM. The disordered stretch occupies residues 364 to 416; it reads QPGQTEPGTQTMWDGYSQPGQTEPGTQTMWDGYSQPGQTEPGTQTTWDGYSQP. Residues 398-409 are compositionally biased toward low complexity; the sequence is QPGQTEPGTQTT.

It belongs to the peptidase M35 family. Requires Zn(2+) as cofactor.

Its subcellular location is the secreted. The catalysed reaction is Preferential cleavage of bonds with hydrophobic residues in P1'. Also 3-Asn-|-Gln-4 and 8-Gly-|-Ser-9 bonds in insulin B chain.. In terms of biological role, secreted metalloproteinase that allows assimilation of proteinaceous substrates. Shows high activities on basic nuclear substrates such as histone and protamine. May be involved in virulence. In Aspergillus fumigatus (strain ATCC MYA-4609 / CBS 101355 / FGSC A1100 / Af293) (Neosartorya fumigata), this protein is Neutral protease 2 homolog AFUB_070680.